Consider the following 37-residue polypeptide: Large ribosomal subunit protein bL36 (37 aa).

Belongs to the bacterial ribosomal protein bL36 family.

This Thioalkalivibrio sulfidiphilus (strain HL-EbGR7) protein is Large ribosomal subunit protein bL36.